A 521-amino-acid polypeptide reads, in one-letter code: MADQQLGVLKALDVAKTQLYHFTAIVIAGMGFFTDAYDLFCVSLVTKLLGRLYYFNPTSAKPGSLPPHVAAAVNGVALCGTLAGQLFFGWLGDKLGRKKVYGITLIMMILCSVASGLSLGNSAKGVMTTLCFFRFWLGFGIGGDYPLSATIMSEYANKKTRGAFIAAVFAMQGVGILAGGFVALAVSSIFDKKFPSPTYEQDRFLSTPPQADYIWRIIVMFGALPAALTYYWRMKMPETARYTALVAKNIKQATADMSKVLQTDLELEERVEDDVKDPKKNYGLFSKEFLRRHGLHLLGTTSTWFLLDIAFYSQNLFQKDIFSAIGWIPKAATMNAIHEVFKIARAQTLIALCSTVPGYWFTVAFIDIIGRFAIQLMGFFMMTVFMFAIAFPYNHWILPDNRIGFVVMYSLTFFFANFGPNATTFIVPAEIFPARLRSTCHGISAATGKAGAIVGAFGFLYAAQPQDKTKTDAGYPPGIGVKNSLIMLGVINFVGMLFTFLVPEPKGKSLEELSGEAEVDK.

Topologically, residues Met1 to Ala24 are cytoplasmic. Residues Ile25–Val45 traverse the membrane as a helical segment. The Extracellular portion of the chain corresponds to Thr46–Ala70. The helical transmembrane segment at Ala71–Leu91 threads the bilayer. Over Gly92–Lys99 the chain is Cytoplasmic. A helical membrane pass occupies residues Val100–Gly120. Over Asn121–Cys131 the chain is Extracellular. Residues Phe132–Met152 traverse the membrane as a helical segment. Residues Ser153 to Arg161 lie on the Cytoplasmic side of the membrane. Residues Gly162–Val182 traverse the membrane as a helical segment. The Extracellular segment spans residues Ala183–Ala211. A helical membrane pass occupies residues Asp212–Trp232. Topologically, residues Arg233 to Arg292 are cytoplasmic. The helical transmembrane segment at His293–Ser313 threads the bilayer. Over Gln314–Thr348 the chain is Extracellular. The helical transmembrane segment at Leu349–Ile369 threads the bilayer. The Cytoplasmic segment spans residues Gly370–Arg371. A helical membrane pass occupies residues Phe372–Pro392. The Extracellular segment spans residues Tyr393 to Arg402. A helical membrane pass occupies residues Ile403 to Thr423. The Cytoplasmic segment spans residues Thr424 to His441. Residues Gly442–Ala462 traverse the membrane as a helical segment. The Extracellular segment spans residues Ala463–Ser484. The chain crosses the membrane as a helical span at residues Leu485–Pro505. Topologically, residues Lys506–Lys521 are cytoplasmic.

The protein belongs to the major facilitator superfamily. Phosphate:H(+) symporter (TC 2.A.1.9) family. In terms of tissue distribution, mainly expressed in roots, especially in the stele of the primary root, the pericycle and trichoblasts of secondary roots. To a lower extent, present in hydathodes and vascular tissues of young leaves.

The protein resides in the membrane. Functionally, high-affinity transporter for external inorganic phosphate. This is Probable inorganic phosphate transporter 1-3 (PHT1-3) from Arabidopsis thaliana (Mouse-ear cress).